Here is a 255-residue protein sequence, read N- to C-terminus: MRILCTNDDGIHAPGLKIVEQIARQLSDDVWVVAPELDQSGVSHSLSLNDPLRLREIGPRHFAVRGTPTDCVIMGARHILGDKGPDLVLSGVNKGRNVAEDVVYSGTIAGALEGSILGFPSFALSQEFSMDNKGTPLWETALAHGPAILRKIIDQGVPKNTVININFPACAPGDVVGVRVTRQGKRNQGFLRVDERRDGRGNPYFWIGFERIAVVDTPAEGTDLAALAAGYVSVTPLRLDRTDDVFSQVLNTTLG.

A divalent metal cation-binding residues include D8, D9, S40, and N93.

Belongs to the SurE nucleotidase family. The cofactor is a divalent metal cation.

It localises to the cytoplasm. The enzyme catalyses a ribonucleoside 5'-phosphate + H2O = a ribonucleoside + phosphate. Functionally, nucleotidase that shows phosphatase activity on nucleoside 5'-monophosphates. The polypeptide is 5'-nucleotidase SurE (Rhodopseudomonas palustris (strain BisB18)).